A 315-amino-acid polypeptide reads, in one-letter code: Methionyl-tRNA formyltransferase (315 aa).

113–116 (SLLP) provides a ligand contact to (6S)-5,6,7,8-tetrahydrofolate.

The protein belongs to the Fmt family.

It catalyses the reaction L-methionyl-tRNA(fMet) + (6R)-10-formyltetrahydrofolate = N-formyl-L-methionyl-tRNA(fMet) + (6S)-5,6,7,8-tetrahydrofolate + H(+). Functionally, attaches a formyl group to the free amino group of methionyl-tRNA(fMet). The formyl group appears to play a dual role in the initiator identity of N-formylmethionyl-tRNA by promoting its recognition by IF2 and preventing the misappropriation of this tRNA by the elongation apparatus. The chain is Methionyl-tRNA formyltransferase from Shigella boydii serotype 4 (strain Sb227).